Consider the following 159-residue polypeptide: Protein C2 (159 aa).

Positions 43–60 (KKRPPKLTWAPKKKRRKA) match the Nuclear localization signal motif. Residues 65-81 (CGCSYYGGIDCEDGFTH) fold into a zinc finger. The disordered stretch occupies residues 102–139 (PNLLPPPEHNNNGDGEQNNNITNQSQPQPAESVGSPDL). The span at 110–124 (HNNNGDGEQNNNITN) shows a compositional bias: low complexity.

It belongs to the geminiviridae transcriptional activator protein family. In terms of assembly, monomer. Suppress local silencing by interacting with and inactivating host adenosine kinase 2 (ADK2) in the cytoplasm. Interacts with and inhibits host SNF1 kinase.

It localises to the host cytoplasm. Functionally, acts as a suppressor of RNA-mediated gene silencing, also known as post-transcriptional gene silencing (PTGS), a mechanism of plant viral defense that limits the accumulation of viral RNAs. Suppresses the host RNA silencing by inhibiting adenosine kinase 2 (ADK2), a kinase involved in a general methylation pathway. Also suppresses the host basal defense by interacting with and inhibiting SNF1 kinase, a key regulator of cell metabolism implicated in innate antiviral defense. Determines pathogenicity. In Tomato pseudo-curly top virus (TPCTV), this protein is Protein C2.